Reading from the N-terminus, the 523-residue chain is MEPAAALHFSLPASLLLLLLLLLLSLCALVSAQFTVVGPANPILAMVGENTTLRCHLSPEKNAEDMEVRWFRSQFSPAVFVYKGGRERTEEQMEEYRGRITFVSKDINRGSVALVIHNVTAQENGIYRCYFQEGRSYDEAILRLVVAGLGSKPLIEIKAQEDGSIWLECISGGWYPEPLTVWRDPYGEVVPALKEVSIADADGLFMVTTAVIIRDKYVRNVSCSVNNTLLGQEKETVIFIPESFMPSASPWMVALAVILTASPWMVSMTVILAVFIIFMAVSICCIKKLQREKKILSGEKKVEQEEKEIAQQLQEELRWRRTFLHAADVVLDPDTAHPELFLSEDRRSVRRGPYRQRVPDNPERFDSQPCVLGWESFASGKHYWEVEVENVMVWTVGVCRHSVERKGEVLLIPQNGFWTLEMFGNQYRALSSPERILPLKESLCRVGVFLDYEAGDVSFYNMRDRSHIYTCPRSAFTVPVRPFFRLGSDDSPIFICPALTGASGVMVPEEGLKLHRVGTHQSL.

Positions 1 to 32 are cleaved as a signal peptide; the sequence is MEPAAALHFSLPASLLLLLLLLLLSLCALVSA. The Extracellular segment spans residues 33 to 265; sequence QFTVVGPANP…AVILTASPWM (233 aa). The Ig-like V-type domain maps to 34 to 145; sequence FTVVGPANPI…SYDEAILRLV (112 aa). 4 N-linked (GlcNAc...) asparagine glycosylation sites follow: Asn-50, Asn-118, Asn-220, and Asn-226. Cys-55 and Cys-129 are oxidised to a cystine. Positions 153–234 constitute an Ig-like C2-type domain; sequence PLIEIKAQED…VNNTLLGQEK (82 aa). The chain crosses the membrane as a helical span at residues 266-286; it reads VSMTVILAVFIIFMAVSICCI. Residues 286–321 adopt a coiled-coil conformation; the sequence is IKKLQREKKILSGEKKVEQEEKEIAQQLQEELRWRR. Residues 287–523 are Cytoplasmic-facing; it reads KKLQREKKIL…LHRVGTHQSL (237 aa). One can recognise a B30.2/SPRY domain in the interval 309-502; that stretch reads IAQQLQEELR…IFICPALTGA (194 aa).

This sequence belongs to the immunoglobulin superfamily. BTN/MOG family. N-glycosylated. Highly expressed in brain, bone marrow, small intestine, muscle, spleen and pancreas. Moderate expression was seen in lung, liver and kidney.

The protein resides in the membrane. Functionally, inhibits the proliferation of CD4 and CD8 T-cells activated by anti-CD3 antibodies, T-cell metabolism and IL2 and IFNG secretion. This is Butyrophilin subfamily 2 member A2 (BTN2A2) from Homo sapiens (Human).